A 384-amino-acid chain; its full sequence is MDGETAGEKGSLVPPPGALGGSALGGAPAPGVRREPKKYAVTDDYQLSKQVLGLGVNGKVLECYHRRSGQKCALKLLYDSPKARQEVDHHWQASGGPHIVRILDVYENMHHGKRCLLIVMECMEGGELFSRIQERGDQAFTEREAAEIMRDIGTAIQFLHSRNIAHRDVKPENLLYTSKEKDAVLKLTDFGFAKETTQNALQTPCYTPYYVAPEVLGPEKYDKSCDMWSLGVIMYILLCGFPPFYSNTGQAISPGMKRRIRLGQYSFPNPEWLDVSEDAKQLIRLLLKTDPTERLTIMQFMNHPWINQSMVVPQTPLYTARVLQEDKDHWDDVKEEMTSALATMRVDYDQVKIKDLKTSNNRLLNKRRKKQAGSSSASQGCNNQ.

Position 1 is an N-acetylmethionine (methionine 1). The interval 1 to 33 (MDGETAGEKGSLVPPPGALGGSALGGAPAPGVR) is disordered. Positions 46-306 (QLSKQVLGLG…IMQFMNHPWI (261 aa)) constitute a Protein kinase domain. Residues 52 to 60 (LGLGVNGKV) and lysine 75 each bind ATP. Aspartate 168 functions as the Proton acceptor in the catalytic mechanism. Phosphothreonine; by MAPK14 is present on threonine 203. Serine 253 carries the post-translational modification Phosphoserine; by MAPK14. The residue at position 309 (serine 309) is a Phosphoserine; by autocatalysis. Positions 309 to 345 (SMVVPQTPLYTARVLQEDKDHWDDVKEEMTSALATMR) are autoinhibitory helix. A Phosphothreonine; by MAPK14 modification is found at threonine 315. The Nuclear export signal (NES) signature appears at 337–346 (MTSALATMRV). The interval 347-371 (DYDQVKIKDLKTSNNRLLNKRRKKQ) is p38 MAPK-binding site. Short sequence motifs (bipartite nuclear localization signal) lie at residues 352 to 355 (KIKD) and 366 to 370 (KRRKK). The tract at residues 359–384 (SNNRLLNKRRKKQAGSSSASQGCNNQ) is disordered. A compositionally biased stretch (polar residues) spans 372–384 (AGSSSASQGCNNQ).

Belongs to the protein kinase superfamily. CAMK Ser/Thr protein kinase family. As to quaternary structure, heterodimer with p38-alpha/MAPK14. The heterodimer with p38-alpha/MAPK14 forms a stable complex: molecules are positioned 'face to face' so that the ATP-binding sites of both kinases are at the heterodimer interface. Interacts with TCF3 and with polycomb proteins, such as PCH2 and BMI1/PCGF4. In terms of processing, phosphorylated and activated by MAPK1/ERK2 and MAPK3/ERK1. Phosphorylated and activated by MAP kinase p38-alpha/MAPK14 at Thr-201, Ser-251 and Thr-313. Isoform 3 is degraded following phosphorylation at Thr-203. Ubiquitously expressed (at protein level). Isoform 3 is expressed in skeletal muscles and heart.

It is found in the nucleus. Its subcellular location is the cytoplasm. It catalyses the reaction L-seryl-[protein] + ATP = O-phospho-L-seryl-[protein] + ADP + H(+). It carries out the reaction L-threonyl-[protein] + ATP = O-phospho-L-threonyl-[protein] + ADP + H(+). Activated following phosphorylation by p38-alpha/MAPK14 following various stresses. Inhibited by ligand 5B (2'-[2-(1,3-benzodioxol-5-yl)pyrimidin-4-yl]-5',6'-dihydrospiro[piperidine-4,7'-pyrrolo[3,2-c]pyridin]- 4'(1'h)-one) and ligand P4O (2-[2-(2-fluorophenyl)pyridin-4-yl]-1,5,6,7-tetrahydro- 4h-pyrrolo[3,2-c]pyridin-4-one), 2 ATP-competitive inhibitors. In terms of biological role, stress-activated serine/threonine-protein kinase involved in cytokines production, endocytosis, cell migration, chromatin remodeling and transcriptional regulation. Following stress, it is phosphorylated and activated by MAP kinase p38-alpha/MAPK14, leading to phosphorylation of substrates. Phosphorylates serine in the peptide sequence, Hyd-X-R-X(2)-S, where Hyd is a large hydrophobic residue. MAPKAPK2 and MAPKAPK3, share the same function and substrate specificity, but MAPKAPK3 kinase activity and level in protein expression are lower compared to MAPKAPK2. Phosphorylates HSP27/HSPB1, KRT18, KRT20, RCSD1, RPS6KA3, TAB3 and TTP/ZFP36. Mediates phosphorylation of HSP27/HSPB1 in response to stress, leading to dissociate HSP27/HSPB1 from large small heat-shock protein (sHsps) oligomers and impair their chaperone activities and ability to protect against oxidative stress effectively. Involved in inflammatory response by regulating tumor necrosis factor (TNF) and IL6 production post-transcriptionally: acts by phosphorylating AU-rich elements (AREs)-binding proteins, such as TTP/ZFP36, leading to regulate the stability and translation of TNF and IL6 mRNAs. Phosphorylation of TTP/ZFP36, a major post-transcriptional regulator of TNF, promotes its binding to 14-3-3 proteins and reduces its ARE mRNA affinity leading to inhibition of dependent degradation of ARE-containing transcript. Involved in toll-like receptor signaling pathway (TLR) in dendritic cells: required for acute TLR-induced macropinocytosis by phosphorylating and activating RPS6KA3. Also acts as a modulator of Polycomb-mediated repression. This chain is MAP kinase-activated protein kinase 3 (Mapkapk3), found in Mus musculus (Mouse).